A 175-amino-acid chain; its full sequence is Zinc finger protein ZAT18 (175 aa).

C2H2-type zinc fingers lie at residues 49–71 (FECKTCNRKFDSFQALGGHRASH) and 93–115 (HKCTICDQMFGTGQALGGHMRKH). A Nuclear localization signal motif is present at residues 71-78 (HKKPKLIV). Residues 146 to 152 (LDLNLTP) carry the EAR-like (transcriptional repression) motif.

As to expression, mostly expressed in stems, siliques and leaves, and, to a lower extent, in cotyledons, hypocotyls and roots.

It is found in the nucleus. Functionally, transcription factor involved in stress responses. Positive regulator of the jasmonic acid (JA)- mediated signaling pathway. Triggers the up-regulation of LOX3, VSP2, PAL1 and PAL2 in a JA-dependent manner. Promotes drought and osmotic stress tolerance by preventing reactive oxygen species (ROS) production (e.g. H(2)O(2)). This is Zinc finger protein ZAT18 from Arabidopsis thaliana (Mouse-ear cress).